The following is a 474-amino-acid chain: L-arabinose isomerase (474 aa).

The Mn(2+) site is built by E306, E331, H348, and H447.

This sequence belongs to the arabinose isomerase family. The cofactor is Mn(2+).

It catalyses the reaction beta-L-arabinopyranose = L-ribulose. The protein operates within carbohydrate degradation; L-arabinose degradation via L-ribulose; D-xylulose 5-phosphate from L-arabinose (bacterial route): step 1/3. Catalyzes the conversion of L-arabinose to L-ribulose. The chain is L-arabinose isomerase from Oceanobacillus iheyensis (strain DSM 14371 / CIP 107618 / JCM 11309 / KCTC 3954 / HTE831).